The chain runs to 346 residues: 4-hydroxy-2-oxovalerate aldolase (346 aa).

Residues 8–260 (VTVHDMTLRD…ETGVDVFKIQ (253 aa)) form the Pyruvate carboxyltransferase domain. Residue 16–17 (RD) coordinates substrate. Asp-17 is a Mn(2+) binding site. His-20 acts as the Proton acceptor in catalysis. Substrate is bound by residues Ser-170 and His-199. Mn(2+) contacts are provided by His-199 and His-201. Tyr-290 is a substrate binding site.

It belongs to the 4-hydroxy-2-oxovalerate aldolase family.

The catalysed reaction is (S)-4-hydroxy-2-oxopentanoate = acetaldehyde + pyruvate. This Polaromonas naphthalenivorans (strain CJ2) protein is 4-hydroxy-2-oxovalerate aldolase.